The sequence spans 147 residues: Probable 4-amino-4-deoxy-L-arabinose-phosphoundecaprenol flippase subunit ArnF (147 aa).

Topologically, residues 1–23 (MSNDHPQGQLPASPARSALKGYL) are cytoplasmic. The chain crosses the membrane as a helical span at residues 24–44 (YVLGSILLVTAAQLGMKWGVI). The Periplasmic segment spans residues 45-62 (QLPTWQMDLAVMLAHPLP). The helical transmembrane segment at 63 to 83 (LLVILAGVGCYALSLLCWLAA) threads the bilayer. At 84–93 (LHSTPLNIAY) the chain is on the cytoplasmic side. A helical transmembrane segment spans residues 94 to 114 (PLLSTSYALVYLLAVNIPLFA). The Periplasmic portion of the chain corresponds to 115–121 (EPLEPGK). A helical transmembrane segment spans residues 122–142 (ALGVLFILLGAVLVGIKPAAG). At 143–147 (TKQTG) the chain is on the cytoplasmic side.

The protein belongs to the ArnF family. In terms of assembly, heterodimer of ArnE and ArnF.

The protein localises to the cell inner membrane. Its pathway is bacterial outer membrane biogenesis; lipopolysaccharide biosynthesis. Its function is as follows. Translocates 4-amino-4-deoxy-L-arabinose-phosphoundecaprenol (alpha-L-Ara4N-phosphoundecaprenol) from the cytoplasmic to the periplasmic side of the inner membrane. The protein is Probable 4-amino-4-deoxy-L-arabinose-phosphoundecaprenol flippase subunit ArnF of Aeromonas hydrophila subsp. hydrophila (strain ATCC 7966 / DSM 30187 / BCRC 13018 / CCUG 14551 / JCM 1027 / KCTC 2358 / NCIMB 9240 / NCTC 8049).